Here is a 60-residue protein sequence, read N- to C-terminus: UPF0434 protein mma_2578 (60 aa).

This sequence belongs to the UPF0434 family.

The polypeptide is UPF0434 protein mma_2578 (Janthinobacterium sp. (strain Marseille) (Minibacterium massiliensis)).